Reading from the N-terminus, the 100-residue chain is Large ribosomal subunit protein uL23 (100 aa).

Belongs to the universal ribosomal protein uL23 family. Part of the 50S ribosomal subunit. Contacts protein L29, and trigger factor when it is bound to the ribosome.

One of the early assembly proteins it binds 23S rRNA. One of the proteins that surrounds the polypeptide exit tunnel on the outside of the ribosome. Forms the main docking site for trigger factor binding to the ribosome. In Mycolicibacterium paratuberculosis (strain ATCC BAA-968 / K-10) (Mycobacterium paratuberculosis), this protein is Large ribosomal subunit protein uL23.